Reading from the N-terminus, the 606-residue chain is ATP-dependent rRNA helicase spb4 (606 aa).

Residues 1 to 29 carry the Q motif motif; the sequence is MSFQSINIDKWLKNAVAAQGFKKMTPVQA. The Helicase ATP-binding domain maps to 32–213; sequence IPLFLKNKDL…KIAGLRNSVR (182 aa). ATP is bound at residue 45–52; sequence AVTGSGKT. Residues 161–164 carry the DEAD box motif; it reads DEAD. A Helicase C-terminal domain is found at 246–400; sequence CMIHLLCTIE…ALDLSRLKVL (155 aa). Residues 521–574 are disordered; it reads KQKEVKEKRNTRREKRKSKKEFLKAQKNEASNNLKQEIVSKAGAQETENDDLID. Positions 521-601 form a coiled coil; sequence KQKEVKEKRN…KSKKRKNQAS (81 aa). Positions 529 to 539 are enriched in basic residues; sequence RNTRREKRKSK.

The protein belongs to the DEAD box helicase family. DDX55/SPB4 subfamily. In terms of assembly, component of pre-60S ribosomal complexes.

It localises to the nucleus. The protein resides in the nucleolus. It carries out the reaction ATP + H2O = ADP + phosphate + H(+). In terms of biological role, ATP-binding RNA helicase involved in the biogenesis of 60S ribosomal subunits. Binds 90S pre-ribosomal particles and dissociates from pre-60S ribosomal particles after processing of 27SB pre-rRNA. Required for the normal formation of 18S rRNA through the processing of pre-rRNAs at sites A0, A1 and A2, and the normal formation of 25S and 5.8S rRNAs through the processing of pre-rRNAs at sites C1 and C2. The protein is ATP-dependent rRNA helicase spb4 of Schizosaccharomyces pombe (strain 972 / ATCC 24843) (Fission yeast).